A 3255-amino-acid chain; its full sequence is Genome polyprotein (3255 aa).

One can recognise a Peptidase S30 domain in the interval 292-437; it reads VMNQQTLTAL…HTLTHRMVQY (146 aa). Catalysis depends on for P1 proteinase activity residues H345, D354, and S388. Positions 489-492 match the Involved in interaction with stylet and aphid transmission motif; it reads KITC. The short motif at 747–749 is the Involved in virions binding and aphid transmission element; the sequence is PTK. In terms of domain architecture, Peptidase C6 spans 773–895; sequence MFVAKDGYCY…ESEMQHYRVG (123 aa). Catalysis depends on for helper component proteinase activity residues C781 and H854. The 153-residue stretch at 1397 to 1549 folds into the Helicase ATP-binding domain; sequence EIAHNEYRDI…PMHMVDITTE (153 aa). 1410-1417 serves as a coordination point for ATP; the sequence is GGVGSGKS. The short motif at 1499-1502 is the DECH box element; that stretch reads DECH. Positions 1568–1727 constitute a Helicase C-terminal domain; sequence DATKKGDNIL…GLPVMTSNVS (160 aa). The Nuclear localization signal signature appears at 2062-2069; sequence EKGKKSGK. Y2084 is subject to O-(5'-phospho-RNA)-tyrosine. The Peptidase C4 domain occupies 2215–2433; the sequence is SKTLFRGLRD…MVWGGINLIN (219 aa). Catalysis depends on for nuclear inclusion protein A activity residues H2260, D2295, and C2365. The RdRp catalytic domain maps to 2699–2823; sequence WVYCDADGSQ…AIKPEYESLL (125 aa). The disordered stretch occupies residues 2980–3027; that stretch reads TKLDAGQGSKNDDKQKSSADSKDNVITEKGSGSGQVRKDDDINAGLHG. Basic and acidic residues predominate over residues 2989–3005; the sequence is KNDDKQKSSADSKDNVI.

This sequence belongs to the potyviridae genome polyprotein family. In terms of assembly, interacts with host eIF4E protein (via cap-binding region); this interaction mediates the translation of the VPg-viral RNA conjugates. Part of a complex that comprises VPg, RNA, host EIF4E and EIF4G; this interaction mediates the translation of the VPg-viral RNA conjugates. VPg is uridylylated by the polymerase and is covalently attached to the 5'-end of the genomic RNA. This uridylylated form acts as a nucleotide-peptide primer for the polymerase. In terms of processing, potyviral RNA is expressed as two polyproteins which undergo post-translational proteolytic processing. Genome polyprotein is processed by NIa-pro, P1 and HC-pro proteinases resulting in the production of at least ten individual proteins. P3N-PIPO polyprotein is cleaved by P1 and HC-pro proteinases resulting in the production of three individual proteins. The P1 proteinase and the HC-pro cleave only their respective C-termini autocatalytically. 6K1 is essential for proper proteolytic separation of P3 from CI.

The protein localises to the host cytoplasmic vesicle. It is found in the host nucleus. Its subcellular location is the virion. The catalysed reaction is RNA(n) + a ribonucleoside 5'-triphosphate = RNA(n+1) + diphosphate. The enzyme catalyses Hydrolyzes glutaminyl bonds, and activity is further restricted by preferences for the amino acids in P6 - P1' that vary with the species of potyvirus, e.g. Glu-Xaa-Xaa-Tyr-Xaa-Gln-|-(Ser or Gly) for the enzyme from tobacco etch virus. The natural substrate is the viral polyprotein, but other proteins and oligopeptides containing the appropriate consensus sequence are also cleaved.. It carries out the reaction Hydrolyzes a Gly-|-Gly bond at its own C-terminus, commonly in the sequence -Tyr-Xaa-Val-Gly-|-Gly, in the processing of the potyviral polyprotein.. Its function is as follows. Required for aphid transmission and also has proteolytic activity. Only cleaves a Gly-Gly dipeptide at its own C-terminus. Interacts with virions and aphid stylets. Acts as a suppressor of RNA-mediated gene silencing, also known as post-transcriptional gene silencing (PTGS), a mechanism of plant viral defense that limits the accumulation of viral RNAs. May have RNA-binding activity. Has helicase activity. It may be involved in replication. Functionally, indispensable for virus replication. In terms of biological role, mediates the cap-independent, EIF4E-dependent translation of viral genomic RNAs. Binds to the cap-binding site of host EIF4E and thus interferes with the host EIF4E-dependent mRNA export and translation. VPg-RNA directly binds EIF4E and is a template for transcription. Also forms trimeric complexes with EIF4E-EIF4G, which are templates for translation. Its function is as follows. Has RNA-binding and proteolytic activities. An RNA-dependent RNA polymerase that plays an essential role in the virus replication. Functionally, involved in aphid transmission, cell-to-cell and systemis movement, encapsidation of the viral RNA and in the regulation of viral RNA amplification. This chain is Genome polyprotein, found in Lettuce mosaic virus (strain E) (LMV).